Reading from the N-terminus, the 586-residue chain is Phosphomethylpyrimidine synthase (586 aa).

Positions 1–59 are disordered; it reads MKQSVSAEQIELKSSLPGSKKVYVDGPREGMKVPMREIEQSDTNGVPNPPIRVYDTSGP. Positions 22–39 are enriched in basic and acidic residues; it reads VYVDGPREGMKVPMREIE. Substrate contacts are provided by residues Asn193, Met222, Tyr251, His287, 307–309, 348–351, and Glu387; these read SRG and DGLR. Zn(2+) is bound at residue His391. Tyr414 contacts substrate. Residue His455 participates in Zn(2+) binding. Positions 535, 538, and 543 each coordinate [4Fe-4S] cluster.

It belongs to the ThiC family. It depends on [4Fe-4S] cluster as a cofactor.

The enzyme catalyses 5-amino-1-(5-phospho-beta-D-ribosyl)imidazole + S-adenosyl-L-methionine = 4-amino-2-methyl-5-(phosphooxymethyl)pyrimidine + CO + 5'-deoxyadenosine + formate + L-methionine + 3 H(+). Its pathway is cofactor biosynthesis; thiamine diphosphate biosynthesis. In terms of biological role, catalyzes the synthesis of the hydroxymethylpyrimidine phosphate (HMP-P) moiety of thiamine from aminoimidazole ribotide (AIR) in a radical S-adenosyl-L-methionine (SAM)-dependent reaction. This is Phosphomethylpyrimidine synthase from Bacillus cereus (strain ZK / E33L).